A 204-amino-acid chain; its full sequence is Acyl-homoserine-lactone synthase (204 aa).

This sequence belongs to the autoinducer synthase family.

It catalyses the reaction a fatty acyl-[ACP] + S-adenosyl-L-methionine = an N-acyl-L-homoserine lactone + S-methyl-5'-thioadenosine + holo-[ACP] + H(+). Required for the synthesis of acyl-HSL autoinducers that bind to SolR. This chain is Acyl-homoserine-lactone synthase (solI), found in Ralstonia nicotianae (strain ATCC BAA-1114 / GMI1000) (Ralstonia solanacearum).